Reading from the N-terminus, the 89-residue chain is Small ribosomal subunit protein uS15 (89 aa).

This sequence belongs to the universal ribosomal protein uS15 family. Part of the 30S ribosomal subunit. Forms a bridge to the 50S subunit in the 70S ribosome, contacting the 23S rRNA.

Its function is as follows. One of the primary rRNA binding proteins, it binds directly to 16S rRNA where it helps nucleate assembly of the platform of the 30S subunit by binding and bridging several RNA helices of the 16S rRNA. In terms of biological role, forms an intersubunit bridge (bridge B4) with the 23S rRNA of the 50S subunit in the ribosome. The chain is Small ribosomal subunit protein uS15 from Desulforapulum autotrophicum (strain ATCC 43914 / DSM 3382 / VKM B-1955 / HRM2) (Desulfobacterium autotrophicum).